The sequence spans 267 residues: Ubiquinone biosynthesis protein COQ4 homolog, mitochondrial (267 aa).

4 residues coordinate Zn(2+): H170, D171, H174, and E186.

The protein belongs to the COQ4 family. In terms of assembly, component of a multi-subunit COQ enzyme complex. Zn(2+) is required as a cofactor.

The protein localises to the mitochondrion inner membrane. It carries out the reaction a 4-hydroxy-3-methoxy-5-(all-trans-polyprenyl)benzoate + H(+) = a 2-methoxy-6-(all-trans-polyprenyl)phenol + CO2. It functions in the pathway cofactor biosynthesis; ubiquinone biosynthesis. In terms of biological role, lyase that catalyzes the C1-decarboxylation of 4-hydroxy-3-methoxy-5-(all-trans-polyprenyl)benzoic acid into 2-methoxy-6-(all-trans-polyprenyl)phenol during ubiquinone biosynthesis. This Drosophila pseudoobscura pseudoobscura (Fruit fly) protein is Ubiquinone biosynthesis protein COQ4 homolog, mitochondrial.